The following is a 75-amino-acid chain: uncharacterized protein (75 aa).

A signal peptide spans 1 to 18; that stretch reads MRKYLSARSMCCSFFSCA.

This is an uncharacterized protein from Treponema pallidum (strain Nichols).